Reading from the N-terminus, the 198-residue chain is MARIATESRTTGETKIQVTLNLDGSGKAQVDTGVGFLDHMLDQIARHGGMDLEIEACGDQHIDDHHTVEDVGITMGQAFRQAIGDRRGITRFGHAYVPLDEALSRVVVDLSNRPSLSWRVKFPTQKVGNFDTELFKEWFAAFAQQGGITMHVESLYGENSHHIAESCFKALARALRSACAVDATLGGVAPSTKGTLSD.

It belongs to the imidazoleglycerol-phosphate dehydratase family.

It localises to the cytoplasm. It catalyses the reaction D-erythro-1-(imidazol-4-yl)glycerol 3-phosphate = 3-(imidazol-4-yl)-2-oxopropyl phosphate + H2O. Its pathway is amino-acid biosynthesis; L-histidine biosynthesis; L-histidine from 5-phospho-alpha-D-ribose 1-diphosphate: step 6/9. The protein is Imidazoleglycerol-phosphate dehydratase of Magnetococcus marinus (strain ATCC BAA-1437 / JCM 17883 / MC-1).